The primary structure comprises 899 residues: Translation initiation factor IF-2 (899 aa).

Disordered regions lie at residues 94–167 and 259–309; these read TFTK…VVVK and FNQE…HGFE. The span at 107–121 shows a compositional bias: basic and acidic residues; sequence AKARQETEERTRPQE. Over residues 147–164 the composition is skewed to low complexity; it reads RAAQQKETAKTTSTTTEV. A tr-type G domain is found at 399-568; the sequence is TRPPVVTIMG…LIQSELMELK (170 aa). The segment at 408 to 415 is G1; sequence GHVDHGKT. 408–415 provides a ligand contact to GTP; sequence GHVDHGKT. The segment at 433–437 is G2; it reads GITQH. The interval 454–457 is G3; sequence DTPG. GTP is bound by residues 454–458 and 508–511; these read DTPGH and NKMD. A G4 region spans residues 508 to 511; sequence NKMD. Residues 544–546 are G5; sequence SAH.

The protein belongs to the TRAFAC class translation factor GTPase superfamily. Classic translation factor GTPase family. IF-2 subfamily.

It localises to the cytoplasm. Functionally, one of the essential components for the initiation of protein synthesis. Protects formylmethionyl-tRNA from spontaneous hydrolysis and promotes its binding to the 30S ribosomal subunits. Also involved in the hydrolysis of GTP during the formation of the 70S ribosomal complex. The protein is Translation initiation factor IF-2 of Acinetobacter baylyi (strain ATCC 33305 / BD413 / ADP1).